The chain runs to 241 residues: MIAGVLRRSSLPSRQTLSAALASFNSCISHNLTPATTGASVSSRFTLASSPNSFGIRARNIHIRSEPSMIVPAGIASQGYATVTKDRKNEIKKAKIKISPDNVRPLSRKEIALQKEAAEESTSKIKGTKICIAIRSFVNPEKQAWCLPPHTRKVAMPDTRTLYTVLRSPHVDKKSREQFEMRFKKRFLVIKAQSHELSKKLFWLKRYRILGAQYELQFHCKTRLDMTQVLGNINGSTTNAY.

The transit peptide at 1-54 (MIAGVLRRSSLPSRQTLSAALASFNSCISHNLTPATTGASVSSRFTLASSPNSF) directs the protein to the mitochondrion.

The protein belongs to the universal ribosomal protein uS10 family. As to quaternary structure, component of the mitochondrial ribosome small subunit.

The protein resides in the mitochondrion. This is Small ribosomal subunit protein uS10m (RPS10) from Arabidopsis thaliana (Mouse-ear cress).